Here is a 534-residue protein sequence, read N- to C-terminus: UDP-glucuronosyltransferase 1A3 (534 aa).

The N-terminal stretch at 1-28 (MATGLQVPLPWLATGLLLLLSVQPWAES) is a signal peptide. 4 N-linked (GlcNAc...) asparagine glycosylation sites follow: N119, N142, N296, and N348. A helical membrane pass occupies residues 492 to 508 (VIGFLLAVVLTVAFITF).

The protein belongs to the UDP-glycosyltransferase family. In terms of assembly, homodimer. Homooligomer. Interacts with UGT1A1, UGT1A4, UGT1A6, UGT1A7, UGT1A8, UGT1A9 and UGT1A10 to form heterodimers. Isoform 1 interacts with isoform 2/i2 suggesting that oligomerization is involved in negative regulation of transferase activity by isoform 2. Isoform 1 also interacts with respective i2 isoforms of UGT1A1, UGT1A4, UGT1A6, UGT1A7, UGT1A8, UGT1A9 and UGT1A10. Expressed in liver, kidney, colon, esophagus and small intestine. As to expression, expressed in liver, kidney and colon. Not expressed in esophagus and small intestine.

The protein resides in the endoplasmic reticulum membrane. The catalysed reaction is glucuronate acceptor + UDP-alpha-D-glucuronate = acceptor beta-D-glucuronoside + UDP + H(+). It catalyses the reaction 17beta-estradiol + UDP-alpha-D-glucuronate = 17beta-estradiol 3-O-(beta-D-glucuronate) + UDP + H(+). It carries out the reaction 17beta-estradiol + UDP-alpha-D-glucuronate = 17beta-estradiol 17-O-(beta-D-glucuronate) + UDP + H(+). The enzyme catalyses 17alpha-estradiol + UDP-alpha-D-glucuronate = 17alpha-estradiol 3-O-(beta-D-glucuronate) + UDP + H(+). The catalysed reaction is estrone + UDP-alpha-D-glucuronate = estrone 3-O-(beta-D-glucuronate) + UDP + H(+). It catalyses the reaction chenodeoxycholate + UDP-alpha-D-glucuronate = chenodeoxycholoyl-24-O-(beta-D-glucuronate) + UDP. It carries out the reaction deoxycholate + UDP-alpha-D-glucuronate = deoxycholoyl-24-O-(beta-D-glucuronate) + UDP. The enzyme catalyses lithocholate + UDP-alpha-D-glucuronate = lithocholoyl-24-O-(beta-D-glucuronate) + UDP. The catalysed reaction is hyodeoxycholate + UDP-alpha-D-glucuronate = hyodeoxycholoyl-24-O-(beta-D-glucuronate) + UDP. It catalyses the reaction hyocholate + UDP-alpha-D-glucuronate = hyocholoyl-24-O-(beta-D-glucuronate) + UDP. It carries out the reaction calcidiol + UDP-alpha-D-glucuronate = calcidiol 25-O-(beta-D-glucuronide) + UDP + H(+). The enzyme catalyses (E)-ferulate + UDP-alpha-D-glucuronate = (E)-4-O-(beta-D-glucuronosyl)-ferulate + UDP + H(+). The catalysed reaction is (E)-ferulate + UDP-alpha-D-glucuronate = (E)-ferulic acid beta-D-glucuronate ester + UDP. It catalyses the reaction losartan + UDP-alpha-D-glucuronate = losartan-2-N-beta-D-glucuronide + UDP. It carries out the reaction candesartan + UDP-alpha-D-glucuronate = candesartan-2-N-beta-D-glucuronide + UDP. The enzyme catalyses zolasartan + UDP-alpha-D-glucuronate = zolarsartan-2-N-beta-D-glucuronide + UDP. Functionally, UDP-glucuronosyltransferase (UGT) that catalyzes phase II biotransformation reactions in which lipophilic substrates are conjugated with glucuronic acid to increase the metabolite's water solubility, thereby facilitating excretion into either the urine or bile. Essential for the elimination and detoxification of drugs, xenobiotics and endogenous compounds. Catalyzes the glucuronidation of endogenous estrogen hormones such as estradiol and estrone. Contributes to bile acid (BA) detoxification by catalyzing the glucuronidation of BA substrates, which are natural detergents for dietary lipids absorption. Involved in the glucuronidation of calcidiol, which is the major circulating form of vitamin D3, essential for the regulation of calcium and phosphate homeostasis. Involved in the glucuronidation of the phytochemical ferulic acid at the phenolic or the carboxylic acid group. Involved in the glucuronidation of the AGTR1 angiotensin receptor antagonists losartan, candesartan and zolarsartan, which can inhibit the effect of angiotensin II. Lacks UDP-glucuronosyltransferase (UGT) activity but acts as a negative regulator of isoform 1. The polypeptide is UDP-glucuronosyltransferase 1A3 (Homo sapiens (Human)).